Reading from the N-terminus, the 134-residue chain is Small ribosomal subunit protein uS9 (134 aa).

Positions 109–134 are disordered; sequence DARRTEPHKPSKSSKGPRAKRQKSYR. Positions 118–134 are enriched in basic residues; sequence PSKSSKGPRAKRQKSYR.

This sequence belongs to the universal ribosomal protein uS9 family.

In Methanococcus maripaludis (strain DSM 14266 / JCM 13030 / NBRC 101832 / S2 / LL), this protein is Small ribosomal subunit protein uS9.